The chain runs to 210 residues: Small ribosomal subunit protein uS7 (210 aa).

This sequence belongs to the universal ribosomal protein uS7 family.

This chain is Small ribosomal subunit protein uS7 (RPS5), found in Podocoryna carnea (Hydrozoan).